The sequence spans 709 residues: Polyribonucleotide nucleotidyltransferase (709 aa).

Residues Asp486 and Asp492 each contribute to the Mg(2+) site. The KH domain occupies 553-612 (PRIHTIKINPDKIKDVIGKGGSVIRALTEETGTTIEIEDDGTVKIAATDGEKAKHAISRI). In terms of domain architecture, S1 motif spans 622–690 (GRIYAGKVTR…RQGRVRLSIK (69 aa)).

Belongs to the polyribonucleotide nucleotidyltransferase family. Component of the RNA degradosome, which is a multiprotein complex involved in RNA processing and mRNA degradation. Mg(2+) serves as cofactor.

It is found in the cytoplasm. The enzyme catalyses RNA(n+1) + phosphate = RNA(n) + a ribonucleoside 5'-diphosphate. In terms of biological role, involved in mRNA degradation. Catalyzes the phosphorolysis of single-stranded polyribonucleotides processively in the 3'- to 5'-direction. This is Polyribonucleotide nucleotidyltransferase from Photorhabdus luminescens (Xenorhabdus luminescens).